Consider the following 222-residue polypeptide: Ribonuclease S-3 (222 aa).

The first 22 residues, 1-22 (MVHVVMMVFLLIVLILCSSTVG), serve as a signal peptide directing secretion. Residue Gln31 coordinates RNA. A disulfide bond links Cys37 and Cys44. A glycan (N-linked (GlcNAc...) asparagine) is linked at Asn40. RNA contacts are provided by residues His55, 92–93 (NV), Phe102, 105–106 (KE), and 109–110 (KH). The active-site Proton donor is the His55. Cys70 and Cys113 are joined by a disulfide. Active-site residues include Glu106 and Lys109. His110 serves as the catalytic Proton acceptor. Asn138 carries an N-linked (GlcNAc...) asparagine glycan. 2 disulfide bridges follow: Cys177–Cys215 and Cys192–Cys203.

Belongs to the RNase T2 family. N-linked core structure at Asn-138 contains xylose.

It carries out the reaction a ribonucleotidyl-ribonucleotide-RNA + H2O = a 3'-end 3'-phospho-ribonucleotide-RNA + a 5'-end dephospho-ribonucleoside-RNA + H(+). Functionally, self-incompatibility (SI) is the inherited ability of a flowering plant to prevent self-fertilization by discriminating between self and non-self pollen during pollination. In many species, self-incompatibility is controlled by the single, multiallelic locus S. The polypeptide is Ribonuclease S-3 (Pyrus pyrifolia (Chinese pear)).